We begin with the raw amino-acid sequence, 75 residues long: Antimicrobial peptide Meucin-49-1 (75 aa).

A signal peptide spans methionine 1 to serine 22.

The protein belongs to the non-disulfide-bridged peptide (NDBP) superfamily. Long chain multifunctional peptide (group 2) family. Expressed by the venom gland.

Its subcellular location is the secreted. Functionally, antimicrobial peptide. This is Antimicrobial peptide Meucin-49-1 from Mesobuthus eupeus (Lesser Asian scorpion).